Reading from the N-terminus, the 149-residue chain is Calmodulin (149 aa).

An N-acetylalanine modification is found at A2. 4 EF-hand domains span residues 8–43, 44–79, 81–116, and 117–149; these read EQIAEFKEAFSLFDKDGDGTITTKELGTVMRSLGQN, PTEAELQDMINEVDADGNGTIDFPEFLTMMARKMKD, DSEEEIREAFRVFDKDGNGFISAAELRHVMTNLGEK, and LTDEEVDEMIREADIDGDGQVNYEEFVKMMTSK. Ca(2+)-binding residues include D21, D23, D25, T27, E32, D57, D59, N61, T63, E68, D94, D96, N98, and E105. K116 carries the N6,N6,N6-trimethyllysine modification. Ca(2+) contacts are provided by D130, D132, D134, Q136, and E141.

The protein belongs to the calmodulin family.

Functionally, calmodulin mediates the control of a large number of enzymes, ion channels and other proteins by Ca(2+). Among the enzymes to be stimulated by the calmodulin-Ca(2+) complex are a number of protein kinases and phosphatases. The protein is Calmodulin of Metridium senile (Brown sea anemone).